The sequence spans 360 residues: Phosphoserine aminotransferase (360 aa).

Arg42 lines the L-glutamate pocket. Residues Ala76 to Ser77, Trp102, Thr152, Asp172, and Gln195 contribute to the pyridoxal 5'-phosphate site. Position 196 is an N6-(pyridoxal phosphate)lysine (Lys196). Asn237–Thr238 provides a ligand contact to pyridoxal 5'-phosphate.

This sequence belongs to the class-V pyridoxal-phosphate-dependent aminotransferase family. SerC subfamily. As to quaternary structure, homodimer. Pyridoxal 5'-phosphate serves as cofactor.

It localises to the cytoplasm. It carries out the reaction O-phospho-L-serine + 2-oxoglutarate = 3-phosphooxypyruvate + L-glutamate. The enzyme catalyses 4-(phosphooxy)-L-threonine + 2-oxoglutarate = (R)-3-hydroxy-2-oxo-4-phosphooxybutanoate + L-glutamate. It participates in amino-acid biosynthesis; L-serine biosynthesis; L-serine from 3-phospho-D-glycerate: step 2/3. In terms of biological role, catalyzes the reversible conversion of 3-phosphohydroxypyruvate to phosphoserine and of 3-hydroxy-2-oxo-4-phosphonooxybutanoate to phosphohydroxythreonine. This Bacillus thuringiensis subsp. konkukian (strain 97-27) protein is Phosphoserine aminotransferase.